We begin with the raw amino-acid sequence, 178 residues long: Nucleoside-triphosphatase THEP1 (178 aa).

Residues 9 to 16 (GPVGSIKA) and 101 to 108 (VIIIDEVG) contribute to the ATP site.

It belongs to the THEP1 NTPase family.

The catalysed reaction is a ribonucleoside 5'-triphosphate + H2O = a ribonucleoside 5'-diphosphate + phosphate + H(+). Has nucleotide phosphatase activity towards ATP, GTP, CTP, TTP and UTP. May hydrolyze nucleoside diphosphates with lower efficiency. The sequence is that of Nucleoside-triphosphatase THEP1 from Thermoplasma volcanium (strain ATCC 51530 / DSM 4299 / JCM 9571 / NBRC 15438 / GSS1).